The chain runs to 626 residues: uncharacterized protein (626 aa).

This is an uncharacterized protein from Dictyostelium discoideum (Social amoeba).